We begin with the raw amino-acid sequence, 715 residues long: Fatty acid oxidation complex subunit alpha (715 aa).

The tract at residues 1–190 (MTTTSAFMLN…KAGLVDDVVP (190 aa)) is enoyl-CoA hydratase. The interval 306-715 (GPLNSVGILG…WTNGETDQGN (410 aa)) is 3-hydroxyacyl-CoA dehydrogenase.

In the N-terminal section; belongs to the enoyl-CoA hydratase/isomerase family. It in the central section; belongs to the 3-hydroxyacyl-CoA dehydrogenase family. As to quaternary structure, heterotetramer of two alpha chains (FadJ) and two beta chains (FadI).

It is found in the cytoplasm. The catalysed reaction is a (3S)-3-hydroxyacyl-CoA = a (2E)-enoyl-CoA + H2O. The enzyme catalyses a 4-saturated-(3S)-3-hydroxyacyl-CoA = a (3E)-enoyl-CoA + H2O. It catalyses the reaction a (3S)-3-hydroxyacyl-CoA + NAD(+) = a 3-oxoacyl-CoA + NADH + H(+). It carries out the reaction (3S)-3-hydroxybutanoyl-CoA = (3R)-3-hydroxybutanoyl-CoA. The protein operates within lipid metabolism; fatty acid beta-oxidation. Catalyzes the formation of a hydroxyacyl-CoA by addition of water on enoyl-CoA. Also exhibits 3-hydroxyacyl-CoA epimerase and 3-hydroxyacyl-CoA dehydrogenase activities. The protein is Fatty acid oxidation complex subunit alpha of Salmonella enteritidis PT4 (strain P125109).